A 320-amino-acid polypeptide reads, in one-letter code: Glutaconate CoA-transferase subunit A (320 aa).

The protein belongs to the 3-oxoacid CoA-transferase subunit A family. In terms of assembly, heterooctamer of four A and four B subunits.

The protein localises to the cytoplasm. The enzyme catalyses trans-glutaconate + acetyl-CoA = (2E)-glutaconyl-CoA + acetate. The protein operates within amino-acid degradation; L-glutamate degradation via hydroxyglutarate pathway; crotonoyl-CoA from L-glutamate: step 3/5. Catalyzes the transfer of the CoA moiety from acetyl-CoA to (R)-2-hydroxyglutarate and related compounds like glutaconate. The protein is Glutaconate CoA-transferase subunit A (gctA) of Acidaminococcus fermentans (strain ATCC 25085 / DSM 20731 / CCUG 9996 / CIP 106432 / VR4).